The following is a 440-amino-acid chain: MESQQLSQHSHISHGSACASVTSKEVHTNQDPLDVSASKIQEYDKASTKANSQQTTTPASSAVPENPHHASPQPASVPPPQNGPYPQQCMMTQNQANPSGWSFYGHPSMIPYTPYQMSPMYFPPGPQSQFPQYPSSVGTPLSTPSPESGNTFTDSSSADSDMTSTKKYVRPPPMLTSPNDFPNWVKTYIKFLQNSNLGGIIPTVNGKPVRQITDDELTFLYNTFQIFAPSQFLPTWVKDILSVDYTDIMKILSKSIEKMQSDTQEANDIVTLANLQYNGSTPADAFETKVTNIIDRLNNNGIHINNKVACQLIMRGLSGEYKFLRYTRHRHLNMTVAELFLDIHAIYEEQQGSRNSKPNYRRNPSDEKNDSRSYTNTTKPKVIARNPQKTNNSKSKTARAHNVSTSNNSPSTDNDSISKSTTEPIQLNNKHDLHLRPGTY.

The segment covering Met-1–Ser-16 has biased composition (low complexity). 3 disordered regions span residues Met-1–Gln-93, Pro-126–Pro-173, and Gly-352–Tyr-440. Composition is skewed to polar residues over residues Thr-48–Ser-60 and Gln-127–Phe-152. Residues Thr-153 to Thr-165 are compositionally biased toward low complexity. The segment at Asn-299–His-401 is RNA-binding. Positions Asn-402–Ser-418 are enriched in low complexity. Residue Ser-416 is modified to Phosphoserine. Residues Lys-419–Asn-428 are compositionally biased toward polar residues. The span at Asn-429–Tyr-440 shows a compositional bias: basic and acidic residues.

In terms of assembly, homotrimer.

It localises to the cytoplasm. Capsid protein (CA) is the structural component of the virus-like particle (VLP), forming the shell that encapsulates the retrotransposons dimeric RNA genome. The particles are assembled from trimer-clustered units and there are holes in the capsid shells that allow for the diffusion of macromolecules. CA also has nucleocapsid-like chaperone activity, promoting primer tRNA(i)-Met annealing to the multipartite primer-binding site (PBS), dimerization of Ty1 RNA and initiation of reverse transcription. The chain is Transposon Ty1-GR2 Gag polyprotein (TY1A-GR2) from Saccharomyces cerevisiae (strain ATCC 204508 / S288c) (Baker's yeast).